A 348-amino-acid chain; its full sequence is Protein RecA (348 aa).

67–74 is an ATP binding site; sequence GPESSGKT.

The protein belongs to the RecA family.

It is found in the cytoplasm. In terms of biological role, can catalyze the hydrolysis of ATP in the presence of single-stranded DNA, the ATP-dependent uptake of single-stranded DNA by duplex DNA, and the ATP-dependent hybridization of homologous single-stranded DNAs. It interacts with LexA causing its activation and leading to its autocatalytic cleavage. In Amycolatopsis mediterranei (strain U-32), this protein is Protein RecA.